An 86-amino-acid chain; its full sequence is Small ribosomal subunit protein bS20 (86 aa).

Belongs to the bacterial ribosomal protein bS20 family.

Its function is as follows. Binds directly to 16S ribosomal RNA. The protein is Small ribosomal subunit protein bS20 of Bifidobacterium adolescentis (strain ATCC 15703 / DSM 20083 / NCTC 11814 / E194a).